Here is a 167-residue protein sequence, read N- to C-terminus: Biotin carboxyl carrier protein of acetyl-CoA carboxylase (167 aa).

Residues 53-91 form a disordered region; sequence SGFSQERPIPTDPKKDTIKETTTENSETSTTTSSGDFIS. The segment covering 64–74 has biased composition (basic and acidic residues); the sequence is DPKKDTIKETT. A compositionally biased stretch (low complexity) spans 75-86; that stretch reads TENSETSTTTSS. The Biotinyl-binding domain occupies 87–163; that stretch reads GDFISSPLVG…QFGSKLFRIA (77 aa). K129 is modified (N6-biotinyllysine).

Homodimer.

It participates in lipid metabolism; fatty acid biosynthesis. Its function is as follows. This protein is a component of the acetyl coenzyme A carboxylase complex; first, biotin carboxylase catalyzes the carboxylation of the carrier protein and then the transcarboxylase transfers the carboxyl group to form malonyl-CoA. The polypeptide is Biotin carboxyl carrier protein of acetyl-CoA carboxylase (accB) (Chlamydia pneumoniae (Chlamydophila pneumoniae)).